A 294-amino-acid chain; its full sequence is Acetyl-coenzyme A carboxylase carboxyl transferase subunit beta (294 aa).

One can recognise a CoA carboxyltransferase N-terminal domain in the interval V25–H294. Residues C29, C32, C48, and C51 each coordinate Zn(2+). The segment at C29–C51 adopts a C4-type zinc-finger fold.

The protein belongs to the AccD/PCCB family. In terms of assembly, acetyl-CoA carboxylase is a heterohexamer composed of biotin carboxyl carrier protein (AccB), biotin carboxylase (AccC) and two subunits each of ACCase subunit alpha (AccA) and ACCase subunit beta (AccD). Requires Zn(2+) as cofactor.

The protein resides in the cytoplasm. The enzyme catalyses N(6)-carboxybiotinyl-L-lysyl-[protein] + acetyl-CoA = N(6)-biotinyl-L-lysyl-[protein] + malonyl-CoA. The protein operates within lipid metabolism; malonyl-CoA biosynthesis; malonyl-CoA from acetyl-CoA: step 1/1. In terms of biological role, component of the acetyl coenzyme A carboxylase (ACC) complex. Biotin carboxylase (BC) catalyzes the carboxylation of biotin on its carrier protein (BCCP) and then the CO(2) group is transferred by the transcarboxylase to acetyl-CoA to form malonyl-CoA. The polypeptide is Acetyl-coenzyme A carboxylase carboxyl transferase subunit beta (Aliivibrio fischeri (strain MJ11) (Vibrio fischeri)).